The chain runs to 96 residues: UPF0235 protein Sputw3181_1321 (96 aa).

Belongs to the UPF0235 family.

This chain is UPF0235 protein Sputw3181_1321, found in Shewanella sp. (strain W3-18-1).